Here is a 457-residue protein sequence, read N- to C-terminus: Bifunctional protein GlmU (457 aa).

Residues 1–229 (MYNCAIILAA…YEEIMGVNSR (229 aa)) are pyrophosphorylase. UDP-N-acetyl-alpha-D-glucosamine-binding positions include 8 to 11 (LAAG), Lys22, Gln73, and 78 to 79 (GT). Asp103 provides a ligand contact to Mg(2+). UDP-N-acetyl-alpha-D-glucosamine-binding residues include Gly140, Glu155, Asn170, and Asn227. Asn227 is a binding site for Mg(2+). The tract at residues 230–250 (VQLSEAEIVMRKRINHKHMVN) is linker. The segment at 251-457 (GVTFIDCEST…WLDKKGLLKK (207 aa)) is N-acetyltransferase. UDP-N-acetyl-alpha-D-glucosamine-binding residues include Arg332 and Lys350. His362 functions as the Proton acceptor in the catalytic mechanism. Residues Tyr365 and Asn376 each contribute to the UDP-N-acetyl-alpha-D-glucosamine site. Acetyl-CoA-binding positions include 385-386 (NY), Ala422, and Arg439.

It in the N-terminal section; belongs to the N-acetylglucosamine-1-phosphate uridyltransferase family. The protein in the C-terminal section; belongs to the transferase hexapeptide repeat family. Homotrimer. Mg(2+) serves as cofactor.

The protein localises to the cytoplasm. It carries out the reaction alpha-D-glucosamine 1-phosphate + acetyl-CoA = N-acetyl-alpha-D-glucosamine 1-phosphate + CoA + H(+). The enzyme catalyses N-acetyl-alpha-D-glucosamine 1-phosphate + UTP + H(+) = UDP-N-acetyl-alpha-D-glucosamine + diphosphate. It functions in the pathway nucleotide-sugar biosynthesis; UDP-N-acetyl-alpha-D-glucosamine biosynthesis; N-acetyl-alpha-D-glucosamine 1-phosphate from alpha-D-glucosamine 6-phosphate (route II): step 2/2. Its pathway is nucleotide-sugar biosynthesis; UDP-N-acetyl-alpha-D-glucosamine biosynthesis; UDP-N-acetyl-alpha-D-glucosamine from N-acetyl-alpha-D-glucosamine 1-phosphate: step 1/1. It participates in bacterial outer membrane biogenesis; LPS lipid A biosynthesis. Functionally, catalyzes the last two sequential reactions in the de novo biosynthetic pathway for UDP-N-acetylglucosamine (UDP-GlcNAc). The C-terminal domain catalyzes the transfer of acetyl group from acetyl coenzyme A to glucosamine-1-phosphate (GlcN-1-P) to produce N-acetylglucosamine-1-phosphate (GlcNAc-1-P), which is converted into UDP-GlcNAc by the transfer of uridine 5-monophosphate (from uridine 5-triphosphate), a reaction catalyzed by the N-terminal domain. In Clostridium botulinum (strain 657 / Type Ba4), this protein is Bifunctional protein GlmU.